Consider the following 165-residue polypeptide: Large ribosomal subunit protein uL10 (165 aa).

The protein belongs to the universal ribosomal protein uL10 family. In terms of assembly, part of the ribosomal stalk of the 50S ribosomal subunit. The N-terminus interacts with L11 and the large rRNA to form the base of the stalk. The C-terminus forms an elongated spine to which L12 dimers bind in a sequential fashion forming a multimeric L10(L12)X complex.

In terms of biological role, forms part of the ribosomal stalk, playing a central role in the interaction of the ribosome with GTP-bound translation factors. In Mycoplasma capricolum subsp. capricolum (strain California kid / ATCC 27343 / NCTC 10154), this protein is Large ribosomal subunit protein uL10.